We begin with the raw amino-acid sequence, 102 residues long: ATP-dependent Clp protease adapter protein ClpS (102 aa).

This sequence belongs to the ClpS family. Binds to the N-terminal domain of the chaperone ClpA.

Its function is as follows. Involved in the modulation of the specificity of the ClpAP-mediated ATP-dependent protein degradation. The polypeptide is ATP-dependent Clp protease adapter protein ClpS (Dechloromonas aromatica (strain RCB)).